Consider the following 321-residue polypeptide: Lipoyl synthase (321 aa).

7 residues coordinate [4Fe-4S] cluster: Cys68, Cys73, Cys79, Cys94, Cys98, Cys101, and Ser308. Residues 80-297 (FNHGTATFMI…KEIALELGFT (218 aa)) enclose the Radical SAM core domain.

This sequence belongs to the radical SAM superfamily. Lipoyl synthase family. It depends on [4Fe-4S] cluster as a cofactor.

It is found in the cytoplasm. It catalyses the reaction [[Fe-S] cluster scaffold protein carrying a second [4Fe-4S](2+) cluster] + N(6)-octanoyl-L-lysyl-[protein] + 2 oxidized [2Fe-2S]-[ferredoxin] + 2 S-adenosyl-L-methionine + 4 H(+) = [[Fe-S] cluster scaffold protein] + N(6)-[(R)-dihydrolipoyl]-L-lysyl-[protein] + 4 Fe(3+) + 2 hydrogen sulfide + 2 5'-deoxyadenosine + 2 L-methionine + 2 reduced [2Fe-2S]-[ferredoxin]. The protein operates within protein modification; protein lipoylation via endogenous pathway; protein N(6)-(lipoyl)lysine from octanoyl-[acyl-carrier-protein]: step 2/2. Functionally, catalyzes the radical-mediated insertion of two sulfur atoms into the C-6 and C-8 positions of the octanoyl moiety bound to the lipoyl domains of lipoate-dependent enzymes, thereby converting the octanoylated domains into lipoylated derivatives. The sequence is that of Lipoyl synthase from Vibrio campbellii (strain ATCC BAA-1116).